The sequence spans 415 residues: Peptide chain release factor subunit 1 (415 aa).

Belongs to the eukaryotic release factor 1 family. In terms of assembly, heterodimer of two subunits, one of which binds GTP.

The protein resides in the cytoplasm. In terms of biological role, directs the termination of nascent peptide synthesis (translation) in response to the termination codons UAA, UAG and UGA. The protein is Peptide chain release factor subunit 1 of Methanosarcina mazei (strain ATCC BAA-159 / DSM 3647 / Goe1 / Go1 / JCM 11833 / OCM 88) (Methanosarcina frisia).